The following is a 485-amino-acid chain: Calcium-dependent protein kinase 27 (485 aa).

Glycine 2 carries N-myristoyl glycine lipidation. The 263-residue stretch at 28–290 (YILGEELGRG…AAEVLGHPWM (263 aa)) folds into the Protein kinase domain. ATP is bound by residues 34–42 (LGRGNFGLT) and lysine 57. Catalysis depends on aspartate 156, which acts as the Proton acceptor. Residue serine 196 is modified to Phosphoserine. Positions 295–325 (ASDKPIDGVVLSRLKRFRDANKFKKVVLKFI) are autoinhibitory domain. 4 consecutive EF-hand domains span residues 332-367 (EEIKGLKTLFTNIDTDKSGNITLEELKTGLTRLGSN), 368-403 (LSKTEVEQLMEAADMDGNGTIDIDEFISATMHRYKL), 404-439 (DRDEHVYKAFQHFDKDNDGHITKEELEMAMKEDGAG), and 444-474 (IKQIIADADTDNDGKINFEEFRTMMRTESSL). Residues aspartate 345, aspartate 347, serine 349, asparagine 351, glutamate 356, aspartate 381, aspartate 383, asparagine 385, threonine 387, glutamate 392, aspartate 417, aspartate 419, aspartate 421, histidine 423, glutamate 428, aspartate 452, aspartate 454, aspartate 456, lysine 458, and glutamate 463 each contribute to the Ca(2+) site.

The protein belongs to the protein kinase superfamily. Ser/Thr protein kinase family. CDPK subfamily.

Its subcellular location is the membrane. It carries out the reaction L-seryl-[protein] + ATP = O-phospho-L-seryl-[protein] + ADP + H(+). The catalysed reaction is L-threonyl-[protein] + ATP = O-phospho-L-threonyl-[protein] + ADP + H(+). Activated by calcium. Autophosphorylation may play an important role in the regulation of the kinase activity. In terms of biological role, may play a role in signal transduction pathways that involve calcium as a second messenger. The protein is Calcium-dependent protein kinase 27 (CPK27) of Arabidopsis thaliana (Mouse-ear cress).